A 132-amino-acid polypeptide reads, in one-letter code: DNA-directed RNA polymerase subunit omega (132 aa).

It belongs to the RNA polymerase subunit omega family. The RNAP catalytic core consists of 2 alpha, 1 beta, 1 beta' and 1 omega subunit. When a sigma factor is associated with the core the holoenzyme is formed, which can initiate transcription.

It carries out the reaction RNA(n) + a ribonucleoside 5'-triphosphate = RNA(n+1) + diphosphate. Functionally, promotes RNA polymerase assembly. Latches the N- and C-terminal regions of the beta' subunit thereby facilitating its interaction with the beta and alpha subunits. This chain is DNA-directed RNA polymerase subunit omega, found in Ehrlichia ruminantium (strain Welgevonden).